A 419-amino-acid polypeptide reads, in one-letter code: Glutamate-1-semialdehyde 2,1-aminomutase (419 aa).

At K259 the chain carries N6-(pyridoxal phosphate)lysine.

This sequence belongs to the class-III pyridoxal-phosphate-dependent aminotransferase family. HemL subfamily. Pyridoxal 5'-phosphate is required as a cofactor.

It is found in the cytoplasm. It catalyses the reaction (S)-4-amino-5-oxopentanoate = 5-aminolevulinate. The protein operates within porphyrin-containing compound metabolism; protoporphyrin-IX biosynthesis; 5-aminolevulinate from L-glutamyl-tRNA(Glu): step 2/2. This Sulfurisphaera tokodaii (strain DSM 16993 / JCM 10545 / NBRC 100140 / 7) (Sulfolobus tokodaii) protein is Glutamate-1-semialdehyde 2,1-aminomutase (hemL).